A 1336-amino-acid chain; its full sequence is MTLPFSWITNDVSQCIDLTQDEHICSLSPVTDTEENMSAFKKSLFGKYDCSLNSEDQCLIVENGSSNFVTSKEAQKEAMKADSDICPPQQMAFNLFNETVVQKDMLNKEKFSHSASSNISNKDDAQYGIVTPVTEIPKQFRTVFKEFPYFNYIQSKALEHLLYSDRNFVLCAPTGSGKTVIFELAIIRLLMQVPMPWTNVKIVYMAPIKALCGQRYDDWKAKFGPVGLNCKELTGDTEMDDLFEIQHAHIIMTTPEKWDSMTRKWKDNTLVQLVRLFLIDEVHILKEENRGATLEVVVSRMKTIYSLSHLSEDRKAFIPMRFVAVSATIPNVEDIADWLSDENSPGVCMKMDESSRPVKLRKVVLGFPCSTKQSEFKFDLTLNYKIANIIQTYSDGRPTLVFCSTRKGVQQAASILTKDAKFVMSIEHKQRLQKCANSIKDSKLRDVLQYGVGYHHAGVDISDRKVIENSFLIGDLPVLFTTSTLAMGVNLPAHLVIVKSTMHYVSGMFQEYSETDILQMIGRAGRPQFDSTATAVIMTRLSTKEKYVHMLDGADTIESSLHKHLVEHLNAEIALHTITDVKVALEWIRSTFLYIRALKNPAYYGFSEGLDKIGIEAKLQELCLKNLNDLSSLGLIKMDEEINFKPTETGKLMALYYIAFNTAKLFHTIRGTETLAELVSLISSCSEFSDVQLRANERRVLNTLNKDKNRVTIRYPMEGKIKTKEMKVNCLIQAHLGCILVQDFSLTQDISKIFRHGTRLAKCLSEFLALQENKFSAFLNALILTKCFKSKLWENSSHISKQLEKIGVTLANAMVNAGLTTFKKIEDTNARELELIVNRHPPFGNQIKESVAHLPKYEIKFQQLAKYRATTAEVVLTVLLTNFKQLQKKRTAPDSHFVMLVIGDDDNQAIFKQKIMDSSLFKTGSWTRKIEIKRASKSTNVCLNLISSEYVGLDIQQSFNICYLGSDSFNADLVTQHKSENIFSQEIYKTSTKTKDIADTNWSMRQTAIKCATRECNHNCKNKDACGHECCKVGVSEKAEMKTNFYSYLNDLRTRNSVSSATPVKRLKMQMEAETRNVNLQNFVFTPKPSIRSPCLKIPENILLQAESSVLTNKYKASHQEETCCKYEIKGCGEKQTKGMPKKTCERRNLTDSDKCNSSSSENAAYVTFDLGNDIWDDFDDDNLLDASNISSLTDQHTSEFTDVSFSKNQPVSKSSLSAGHHEEARYNAMSINKDSYRYLNAKSEVFSQENTQCIDVVPSNQKLHGKMFSENTIKHMFTLQEETNYPVTSKMDSPHNGCWSSNIFFKTPENKTQERGCYHQEDETNAFIGIFNGIF.

In terms of domain architecture, Helicase ATP-binding spans 159–347 (EHLLYSDRNF…WLSDENSPGV (189 aa)). ATP is bound at residue 172 to 179 (APTGSGKT). The DEAH box signature appears at 280–283 (DEVH). Residues 388 to 589 (NIIQTYSDGR…DVKVALEWIR (202 aa)) enclose the Helicase C-terminal domain. Residues 646–961 (PTETGKLMAL…GLDIQQSFNI (316 aa)) form the SEC63 domain. The segment at 1016 to 1031 (CNHNCKNKDACGHECC) adopts a C4-type zinc-finger fold.

This sequence belongs to the helicase family. SKI2 subfamily. Requires Zn(2+) as cofactor.

The enzyme catalyses Couples ATP hydrolysis with the unwinding of duplex DNA by translocating in the 3'-5' direction.. It catalyses the reaction ATP + H2O = ADP + phosphate + H(+). Functionally, required for crossover formation and complete synapsis of homologous chromosomes during meiosis. The protein is Probable ATP-dependent DNA helicase HFM1 (hfm1) of Xenopus tropicalis (Western clawed frog).